The primary structure comprises 558 residues: Vanin-like protein 1 (558 aa).

The N-terminal stretch at M1–S22 is a signal peptide. The CN hydrolase domain maps to Y33–K299. An N-linked (GlcNAc...) asparagine glycan is attached at N65. The active-site Proton acceptor is E76. 3 N-linked (GlcNAc...) asparagine glycosylation sites follow: N103, N120, and N128. K171 serves as the catalytic Proton donor. N-linked (GlcNAc...) asparagine glycosylation is present at N180. C203 functions as the Nucleophile in the catalytic mechanism. Residues N354 and N379 are each glycosylated (N-linked (GlcNAc...) asparagine). A lipid anchor (GPI-anchor amidated serine) is attached at S531. A propeptide spans G532 to S558 (removed in mature form).

Belongs to the carbon-nitrogen hydrolase superfamily. BTD/VNN family. Expressed in larvae and early pupae. Expressed in third instar larvae.

The protein localises to the cell membrane. In Drosophila melanogaster (Fruit fly), this protein is Vanin-like protein 1.